Consider the following 148-residue polypeptide: Universal stress protein YxiE (148 aa).

An N-terminal signal peptide occupies residues Met-1–Ala-18.

Belongs to the universal stress protein A family.

The protein is Universal stress protein YxiE (yxiE) of Bacillus subtilis (strain 168).